Reading from the N-terminus, the 362-residue chain is Cobalt-precorrin-5B C(1)-methyltransferase (362 aa).

It belongs to the CbiD family.

The catalysed reaction is Co-precorrin-5B + S-adenosyl-L-methionine = Co-precorrin-6A + S-adenosyl-L-homocysteine. The protein operates within cofactor biosynthesis; adenosylcobalamin biosynthesis; cob(II)yrinate a,c-diamide from sirohydrochlorin (anaerobic route): step 6/10. In terms of biological role, catalyzes the methylation of C-1 in cobalt-precorrin-5B to form cobalt-precorrin-6A. This chain is Cobalt-precorrin-5B C(1)-methyltransferase, found in Geobacter sulfurreducens (strain ATCC 51573 / DSM 12127 / PCA).